A 214-amino-acid polypeptide reads, in one-letter code: Adenylate kinase (214 aa).

Gly10 to Thr15 serves as a coordination point for ATP. The interval Ser30–Val59 is NMP. AMP contacts are provided by residues Thr31, Arg36, Gln57–Val59, Gly85–Arg88, and Gln92. The interval Gly122–Asp159 is LID. ATP contacts are provided by residues Arg123 and Thr132 to Tyr133. AMP-binding residues include Arg156 and Arg167. Lys200 contacts ATP.

This sequence belongs to the adenylate kinase family. As to quaternary structure, monomer.

Its subcellular location is the cytoplasm. It carries out the reaction AMP + ATP = 2 ADP. The protein operates within purine metabolism; AMP biosynthesis via salvage pathway; AMP from ADP: step 1/1. Functionally, catalyzes the reversible transfer of the terminal phosphate group between ATP and AMP. Plays an important role in cellular energy homeostasis and in adenine nucleotide metabolism. The protein is Adenylate kinase of Vibrio campbellii (strain ATCC BAA-1116).